The chain runs to 310 residues: p-hydroxybenzoic acid efflux pump subunit AaeA (310 aa).

A helical membrane pass occupies residues 12–32; sequence AITLVLVILAFIAIFRAWVYY.

Belongs to the membrane fusion protein (MFP) (TC 8.A.1) family.

It is found in the cell inner membrane. Its function is as follows. Forms an efflux pump with AaeB. The sequence is that of p-hydroxybenzoic acid efflux pump subunit AaeA from Salmonella heidelberg (strain SL476).